The primary structure comprises 90 residues: Electron transfer flavoprotein regulatory factor 1 (90 aa).

Belongs to the complex I LYR family. As to quaternary structure, homotetramer. Interacts with NDUFAB1. Interacts with ETFA. Interacts with ETFB.

Its subcellular location is the mitochondrion. In terms of biological role, acts as a regulator of the electron transfer flavoprotein by promoting the removal of flavin from the ETF holoenzyme (composed of ETFA and ETFB). The sequence is that of Electron transfer flavoprotein regulatory factor 1 from Homo sapiens (Human).